The sequence spans 444 residues: Coagulation factor VII (444 aa).

The first 21 residues, 1–21 (MAPQARGLGLCSLLALQASLA), serve as a signal peptide directing secretion. A propeptide spanning residues 22-39 (AVFITQEEAHSVLRRQRR) is cleaved from the precursor. The region spanning 40–84 (ANSFLEELRPGSLERECKEELCSFEEAREVFQSTERTKQFWITYN) is the Gla domain. 4-carboxyglutamate is present on residues E45, E46, E53, E55, E58, E59, E64, E65, E68, and E74. C56 and C61 are oxidised to a cystine. Residues 85 to 121 (DGDQCASNPCQNGGSCEDQIQSYICFCLADFEGRNCE) form the EGF-like 1; calcium-binding domain. 9 cysteine pairs are disulfide-bonded: C89–C100, C94–C109, C111–C120, C130–C141, C137–C151, C153–C166, C174–C301, C198–C203, and C217–C233. An O-linked (Glc...) serine; alternate glycan is attached at S91. S91 carries an O-linked (Xyl...) serine; alternate glycan. S99 carries O-linked (Fuc) serine glycosylation. Position 102 is a (3R)-3-hydroxyaspartate (D102). In terms of domain architecture, EGF-like 2 spans 126 to 167 (DQLICMYENGGCEQYCSDHVGSQRSCRCHEGYTLLPNGVSCT). The region spanning 192 to 431 (IVGGKVCPKG…YTEWLSRLMR (240 aa)) is the Peptidase S1 domain. The N-linked (GlcNAc...) asparagine glycan is linked to N211. H232 serves as the catalytic Charge relay system. The N-linked (GlcNAc...) asparagine glycan is linked to N242. D281 (charge relay system) is an active-site residue. An N-linked (GlcNAc...) asparagine glycan is attached at N306. Residues C349 and C368 are joined by a disulfide bond. Residue D377 coordinates substrate. C379 and C407 are joined by a disulfide. Catalysis depends on S383, which acts as the Charge relay system.

It belongs to the peptidase S1 family. As to quaternary structure, heterodimer of a light chain and a heavy chain linked by a disulfide bond. Post-translationally, the vitamin K-dependent, enzymatic carboxylation of some glutamate residues allows the modified protein to bind calcium. The iron and 2-oxoglutarate dependent 3-hydroxylation of aspartate and asparagine is (R) stereospecific within EGF domains. In terms of processing, O-glycosylated. O-fucosylated by POFUT1 on a conserved serine or threonine residue found in the consensus sequence C2-X(4,5)-[S/T]-C3 of EGF domains, where C2 and C3 are the second and third conserved cysteines. Post-translationally, can be either O-glucosylated or O-xylosylated at Ser-91 by POGLUT1. In terms of tissue distribution, plasma.

Its subcellular location is the secreted. It carries out the reaction Selective cleavage of Arg-|-Ile bond in factor X to form factor Xa.. Functionally, initiates the extrinsic pathway of blood coagulation. Serine protease that circulates in the blood in a zymogen form. Factor VII is converted to factor VIIa by factor Xa, factor XIIa, factor IXa, or thrombin by minor proteolysis. In the presence of tissue factor and calcium ions, factor VIIa then converts factor X to factor Xa by limited proteolysis. Factor VIIa also converts factor IX to factor IXa in the presence of tissue factor and calcium. The protein is Coagulation factor VII (F7) of Oryctolagus cuniculus (Rabbit).